A 484-amino-acid polypeptide reads, in one-letter code: 6-phosphogluconate dehydrogenase, decarboxylating (484 aa).

NADP(+)-binding positions include 10-15 (GLAVMG), 33-35 (NRT), 75-77 (IKA), and N103. Residues N103 and 129–131 (SGG) contribute to the substrate site. Residue K183 is the Proton acceptor of the active site. Residue 186 to 187 (HN) coordinates substrate. E190 functions as the Proton donor in the catalytic mechanism. Y191, K260, R287, R448, and H454 together coordinate substrate.

The protein belongs to the 6-phosphogluconate dehydrogenase family. Homodimer.

The enzyme catalyses 6-phospho-D-gluconate + NADP(+) = D-ribulose 5-phosphate + CO2 + NADPH. The protein operates within carbohydrate degradation; pentose phosphate pathway; D-ribulose 5-phosphate from D-glucose 6-phosphate (oxidative stage): step 3/3. In terms of biological role, catalyzes the oxidative decarboxylation of 6-phosphogluconate to ribulose 5-phosphate and CO(2), with concomitant reduction of NADP to NADPH. This is 6-phosphogluconate dehydrogenase, decarboxylating from Caenorhabditis elegans.